We begin with the raw amino-acid sequence, 248 residues long: 1-(5-phosphoribosyl)-5-[(5-phosphoribosylamino)methylideneamino] imidazole-4-carboxamide isomerase (248 aa).

Residue Asp8 is the Proton acceptor of the active site. Residue Asp131 is the Proton donor of the active site.

Belongs to the HisA/HisF family.

It is found in the cytoplasm. The catalysed reaction is 1-(5-phospho-beta-D-ribosyl)-5-[(5-phospho-beta-D-ribosylamino)methylideneamino]imidazole-4-carboxamide = 5-[(5-phospho-1-deoxy-D-ribulos-1-ylimino)methylamino]-1-(5-phospho-beta-D-ribosyl)imidazole-4-carboxamide. It functions in the pathway amino-acid biosynthesis; L-histidine biosynthesis; L-histidine from 5-phospho-alpha-D-ribose 1-diphosphate: step 4/9. The protein is 1-(5-phosphoribosyl)-5-[(5-phosphoribosylamino)methylideneamino] imidazole-4-carboxamide isomerase of Cupriavidus pinatubonensis (strain JMP 134 / LMG 1197) (Cupriavidus necator (strain JMP 134)).